Here is a 397-residue protein sequence, read N- to C-terminus: Lysophospholipid transporter LplT (397 aa).

The Periplasmic segment spans residues 1–17 (MSESVHTNTSLWSKGMK). Residues 18–38 (AVIVAQFLSAFGDNALLFATL) traverse the membrane as a helical segment. The Cytoplasmic portion of the chain corresponds to 39 to 52 (ALLKAQFYPEWSQP). Residues 53 to 73 (ILQMVFVGAYILFAPFVGQVA) form a helical membrane-spanning segment. Topologically, residues 74–90 (DSFAKGRVMMFANGLKL) are periplasmic. Residues 91-111 (LGAASICFGINPFLGYTLVGV) form a helical membrane-spanning segment. At 112-144 (GAAAYSPAKYGILGELTTGSKLVKANGLMEAST) the chain is on the cytoplasmic side. Residues 145–165 (IAAILLGSVAGGVLADWHVLV) traverse the membrane as a helical segment. Alanine 166 is a topological domain (periplasmic). Residues 167 to 187 (LAACALAYGGAVVANIYIPKL) traverse the membrane as a helical segment. The Cytoplasmic portion of the chain corresponds to 188–226 (AAARPGQSWNLINMTRSFLNACTSLWRNGETRFSLVGTS). Residues 227–247 (LFWGAGVTLRFLLVLWVPVAL) traverse the membrane as a helical segment. The Periplasmic portion of the chain corresponds to 248–256 (GITDNSTPT). A helical membrane pass occupies residues 257 to 277 (YLNAMVAIGIVVGAGAAAKLV). Topologically, residues 278–280 (TLE) are cytoplasmic. A helical transmembrane segment spans residues 281-301 (TVSRCMPAGILIGVVVLIFSL). Topologically, residues 302–304 (QHE) are periplasmic. Residues 305 to 325 (LLPAYALLMLIGVMGGFFVVP) traverse the membrane as a helical segment. Over 326–343 (LNALLQERGKKSVGAGNA) the chain is Cytoplasmic. A helical membrane pass occupies residues 344-364 (IAVQNLGENSAMLLMLGIYSL). Topologically, residues 365–366 (AV) are periplasmic. The helical transmembrane segment at 367–387 (MVGIPVVPIGIGFGALFALAI) threads the bilayer. Topologically, residues 388 to 397 (TALWIWQRRH) are cytoplasmic.

The protein belongs to the major facilitator superfamily. LplT (TC 2.A.1.42) family.

Its subcellular location is the cell inner membrane. Catalyzes the facilitated diffusion of 2-acyl-glycero-3-phosphoethanolamine (2-acyl-GPE) into the cell. This is Lysophospholipid transporter LplT from Shigella boydii serotype 4 (strain Sb227).